A 72-amino-acid chain; its full sequence is Large ribosomal subunit protein bL31 (72 aa).

This sequence belongs to the bacterial ribosomal protein bL31 family. Type A subfamily. As to quaternary structure, part of the 50S ribosomal subunit.

Functionally, binds the 23S rRNA. The polypeptide is Large ribosomal subunit protein bL31 (Prosthecochloris aestuarii (strain DSM 271 / SK 413)).